Consider the following 621-residue polypeptide: Type 2 DNA topoisomerase 6 subunit B (621 aa).

Residues N48, D80, 101-102 (SR), 111-118 (GQQGIGIS), and K435 contribute to the ATP site.

It belongs to the TOP6B family. Homodimer. Heterotetramer of two Top6A and two Top6B chains.

The catalysed reaction is ATP-dependent breakage, passage and rejoining of double-stranded DNA.. Its function is as follows. Relaxes both positive and negative superturns and exhibits a strong decatenase activity. This is Type 2 DNA topoisomerase 6 subunit B from Methanosarcina mazei (strain ATCC BAA-159 / DSM 3647 / Goe1 / Go1 / JCM 11833 / OCM 88) (Methanosarcina frisia).